The primary structure comprises 362 residues: MSKNIIILSGDHVGPEVTAEAIKVLEAITQARPNVKFNFDHKLIGGAAIDATGSPLPDETLEASKKADAVLLGAVGGPKWGTGAVRPEQGLLKIRKELNLYANLRPCNFMSEKLLDLSPLRSEIVKGTNFTVVRELVGGIYFGTRKEDEGNGEAWDTEKYTVEEVKRITRMAAFLALQSNPPLPVWSLDKANVLASSRLWRKTVTETIEKEFPQLTLNHQLIDSAAMILIQNPSKMNGVIVTSNMFGDIISDEASVIPGSLGLLPSASLSSLPDKNTAFGLYEPCHGSAPDLPPNKVNPIATILSAAMMLRLSLNLKEEADAVEKAVSKVIDNGIVTADLKGASSTTEVGDAVAAEVQKLLK.

Residue glycine 77 to glutamate 88 participates in NAD(+) binding. Substrate-binding residues include arginine 95, arginine 105, arginine 134, and aspartate 223. Mg(2+)-binding residues include aspartate 223, aspartate 248, and aspartate 252. Glycine 287–asparagine 298 is a binding site for NAD(+).

The protein belongs to the isocitrate and isopropylmalate dehydrogenases family. As to quaternary structure, homodimer. Mg(2+) is required as a cofactor. The cofactor is Mn(2+).

The protein resides in the cytoplasm. It catalyses the reaction (2R,3S)-3-isopropylmalate + NAD(+) = 4-methyl-2-oxopentanoate + CO2 + NADH. It functions in the pathway amino-acid biosynthesis; L-leucine biosynthesis; L-leucine from 3-methyl-2-oxobutanoate: step 3/4. In terms of biological role, catalyzes the oxidation of 3-carboxy-2-hydroxy-4-methylpentanoate (3-isopropylmalate) to 3-carboxy-4-methyl-2-oxopentanoate. The product decarboxylates to 4-methyl-2 oxopentanoate. This is 3-isopropylmalate dehydrogenase (LEU2) from Blastobotrys adeninivorans (Yeast).